The following is a 126-amino-acid chain: Probable prefoldin subunit 4 (126 aa).

It belongs to the prefoldin subunit beta family. In terms of assembly, heterohexamer of two PFD-alpha type and four PFD-beta type subunits.

In terms of biological role, binds specifically to cytosolic chaperonin (c-CPN) and transfers target proteins to it. Binds to nascent polypeptide chain and promotes folding in an environment in which there are many competing pathways for nonnative proteins. Appears to play a non-essential role. This Caenorhabditis briggsae protein is Probable prefoldin subunit 4.